The primary structure comprises 258 residues: Deoxyribose-phosphate aldolase (258 aa).

Asp102 serves as the catalytic Proton donor/acceptor. Lys165 acts as the Schiff-base intermediate with acetaldehyde in catalysis. The Proton donor/acceptor role is filled by Lys199.

It belongs to the DeoC/FbaB aldolase family. DeoC type 2 subfamily.

The protein resides in the cytoplasm. The catalysed reaction is 2-deoxy-D-ribose 5-phosphate = D-glyceraldehyde 3-phosphate + acetaldehyde. The protein operates within carbohydrate degradation; 2-deoxy-D-ribose 1-phosphate degradation; D-glyceraldehyde 3-phosphate and acetaldehyde from 2-deoxy-alpha-D-ribose 1-phosphate: step 2/2. Functionally, catalyzes a reversible aldol reaction between acetaldehyde and D-glyceraldehyde 3-phosphate to generate 2-deoxy-D-ribose 5-phosphate. In Vibrio parahaemolyticus serotype O3:K6 (strain RIMD 2210633), this protein is Deoxyribose-phosphate aldolase.